Consider the following 172-residue polypeptide: Adenine phosphoribosyltransferase (172 aa).

Belongs to the purine/pyrimidine phosphoribosyltransferase family. As to quaternary structure, homodimer.

It localises to the cytoplasm. The enzyme catalyses AMP + diphosphate = 5-phospho-alpha-D-ribose 1-diphosphate + adenine. It participates in purine metabolism; AMP biosynthesis via salvage pathway; AMP from adenine: step 1/1. In terms of biological role, catalyzes a salvage reaction resulting in the formation of AMP, that is energically less costly than de novo synthesis. In Clostridium perfringens (strain ATCC 13124 / DSM 756 / JCM 1290 / NCIMB 6125 / NCTC 8237 / Type A), this protein is Adenine phosphoribosyltransferase.